A 292-amino-acid polypeptide reads, in one-letter code: Sulfofructosephosphate aldolase (292 aa).

Residue K193 is the Schiff-base intermediate with substrate of the active site.

The protein belongs to the aldolase LacD family. In terms of assembly, homotetramer.

The enzyme catalyses 6-deoxy-6-sulfo-D-fructose 1-phosphate = (2S)-3-sulfolactaldehyde + dihydroxyacetone phosphate. In terms of biological role, cleaves 6-deoxy-6-sulfo-D-fructose 1-phosphate (SFP) to form dihydroxyacetone phosphate (DHAP) and 3-sulfolactaldehyde (SLA). This chain is Sulfofructosephosphate aldolase (yihT), found in Salmonella typhi.